We begin with the raw amino-acid sequence, 142 residues long: Succinate dehydrogenase assembly factor 2, mitochondrial (142 aa).

It belongs to the SDHAF2 family. In terms of assembly, interacts with the flavoprotein subunit within the SDH catalytic dimer.

It localises to the mitochondrion matrix. Plays an essential role in the assembly of succinate dehydrogenase (SDH), an enzyme complex (also referred to as respiratory complex II) that is a component of both the tricarboxylic acid (TCA) cycle and the mitochondrial electron transport chain, and which couples the oxidation of succinate to fumarate with the reduction of ubiquinone (coenzyme Q) to ubiquinol. Required for flavinylation (covalent attachment of FAD) of the flavoprotein subunit of the SDH catalytic dimer. The chain is Succinate dehydrogenase assembly factor 2, mitochondrial from Debaryomyces hansenii (strain ATCC 36239 / CBS 767 / BCRC 21394 / JCM 1990 / NBRC 0083 / IGC 2968) (Yeast).